The chain runs to 586 residues: uncharacterized protein (586 aa).

Disordered stretches follow at residues 17-64 and 80-123; these read VRRT…ETEE and HSCS…GGAN. Positions 28–37 are enriched in polar residues; it reads PSTSGSIAWT. Low complexity-rich tracts occupy residues 38–52 and 80–91; these read SSESGSAHSSRVSSS and HSCSAATTSQQS. Positions 94-110 are enriched in basic and acidic residues; that stretch reads QSKEHRIGGIKKEEKPI. The segment covering 112 to 123 has biased composition (gly residues); sequence MGGGSSENGGAN. Transmembrane regions (helical) follow at residues 151–171, 191–211, 218–238, 243–263, 283–303, 317–337, 375–395, 413–433, 441–461, 466–486, 513–533, and 536–556; these read WVILVIFMFLSGSNGAQWIQY, WTSMIYMLTYILFFIPAAWLL, LSVLLGALGNCVGAWIKLLST, FWVTFVGQTIVGASQMFTLGI, LGVFGNQLGIAVGFVLPPLIV, TLFLGSAVLNTSILALVICFF, FVILFITYGINTGVFYAISTL, YVGLLIVVAGMAGSVVGGFIL, LTTIMIYLFSFVGMLSFTLTI, MVLVFINAALLGFFMTGYLPI, IFGIALTWLMGIVMHGFGTFT, and IIMSSCLVVGTILTCFIREDL.

Belongs to the major facilitator superfamily. Feline leukemia virus subgroup C receptor (TC 2.A.1.28.1) family.

It localises to the membrane. This is an uncharacterized protein from Caenorhabditis elegans.